The primary structure comprises 187 residues: Photosystem I assembly protein Ycf4 (187 aa).

2 consecutive transmembrane segments (helical) span residues 23–43 (INYFWSFSIFFGAFGFLIVGI) and 70–90 (FYGIAGIFLSFYLWFTMILGV).

This sequence belongs to the Ycf4 family.

The protein localises to the plastid. The protein resides in the chloroplast thylakoid membrane. In terms of biological role, seems to be required for the assembly of the photosystem I complex. The sequence is that of Photosystem I assembly protein Ycf4 from Chara vulgaris (Common stonewort).